Consider the following 230-residue polypeptide: Transmembrane 4 L6 family member 20 (230 aa).

Topologically, residues 1 to 11 are lumenal; that stretch reads MTCCEGWTSCN. Residues 12–32 traverse the membrane as a helical segment; that stretch reads GFSLLVLLLLGVTLNAIPLIL. Topologically, residues 33-44 are cytoplasmic; sequence NFVDEDQFFENP. A helical membrane pass occupies residues 45–65; the sequence is ISCFEWWFPGIIGAGVMAIPA. The Lumenal segment spans residues 66 to 83; it reads TTMSLAARKRACCNNKTG. The helical transmembrane segment at 84-104 threads the bilayer; sequence MFLSSLLNAITVIGAAYCLLV. The Cytoplasmic portion of the chain corresponds to 105-185; that stretch reads SIQALAEGPL…HFNSIENQHR (81 aa). Residues 186 to 206 traverse the membrane as a helical segment; that stretch reads IIHFSVFLGLLLVGILEILFG. Over 207–230 the chain is Lumenal; that stretch reads LSQIIIGFFGCLCGGVSNGRSQIV.

Belongs to the L6 tetraspanin family. Post-translationally, glycosylated at Asn-132 in presence of ceramide which inverts the orientation of TM4SF20 in membranes exposing these residues to the endoplasmic reticulum lumen. In terms of processing, cleaved by signal peptidase at Ser-14 but the peptide does not act as a signal peptide. Cleavage is inhibited by ceramide which inverts the orientation of TM4SF20 in membranes exposing the N-terminus to the cytosol and not to the endoplasmic reticulum lumen.

It is found in the membrane. Its subcellular location is the endoplasmic reticulum membrane. In terms of biological role, polytopic transmembrane protein. Inhibits regulated intramembrane proteolysis (RIP) of CREB3L1, inhibiting its activation and the induction of collagen synthesis. In response to ceramide, which alters TM4SF20 membrane topology, stimulates RIP activation of CREB3L1. Ceramide reverses the direction through which transmembrane helices are translocated into the endoplasmic reticulum membrane during translation of TM4SF20, this mechanism is called 'regulated alternative translocation' (RAT) and regulates the function of the transmembrane protein. In Bos taurus (Bovine), this protein is Transmembrane 4 L6 family member 20 (TM4SF20).